Here is a 78-residue protein sequence, read N- to C-terminus: Large ribosomal subunit protein eL20 (78 aa).

This sequence belongs to the eukaryotic ribosomal protein eL20 family. As to quaternary structure, part of the 50S ribosomal subunit. Binds 23S rRNA.

This Nanoarchaeum equitans (strain Kin4-M) protein is Large ribosomal subunit protein eL20.